The following is a 383-amino-acid chain: S-(hydroxymethyl)glutathione dehydrogenase (383 aa).

C51 contributes to the Zn(2+) binding site. H52 provides a ligand contact to NAD(+). Zn(2+) contacts are provided by H73, E74, C103, C106, C109, C117, and C180. NAD(+) is bound by residues 205–210 (GAGCVG), D229, and 298–300 (IGV).

It belongs to the zinc-containing alcohol dehydrogenase family. Class-III subfamily. The cofactor is Zn(2+).

The enzyme catalyses a primary alcohol + NAD(+) = an aldehyde + NADH + H(+). The catalysed reaction is a secondary alcohol + NAD(+) = a ketone + NADH + H(+). It carries out the reaction S-(hydroxymethyl)glutathione + NADP(+) = S-formylglutathione + NADPH + H(+). It catalyses the reaction S-(hydroxymethyl)glutathione + NAD(+) = S-formylglutathione + NADH + H(+). The enzyme catalyses S-nitrosoglutathione + NADH + H(+) = S-(hydroxysulfenamide)glutathione + NAD(+). Its function is as follows. Oxidizes long-chain alcohols and, in the presence of glutathione, is able to oxidize formaldehyde. Also acts as a S-nitroso-glutathione reductase by catalyzing the NADH-dependent reduction of S-nitrosoglutathione, thereby regulating protein S-nitrosylation. The sequence is that of S-(hydroxymethyl)glutathione dehydrogenase (FDH1) from Aspergillus oryzae (strain ATCC 42149 / RIB 40) (Yellow koji mold).